The sequence spans 360 residues: Phenylalanine--tRNA ligase alpha subunit (360 aa).

Position 260 (E260) interacts with Mg(2+).

Belongs to the class-II aminoacyl-tRNA synthetase family. Phe-tRNA synthetase alpha subunit type 1 subfamily. In terms of assembly, tetramer of two alpha and two beta subunits. Mg(2+) serves as cofactor.

It is found in the cytoplasm. It carries out the reaction tRNA(Phe) + L-phenylalanine + ATP = L-phenylalanyl-tRNA(Phe) + AMP + diphosphate + H(+). In Beijerinckia indica subsp. indica (strain ATCC 9039 / DSM 1715 / NCIMB 8712), this protein is Phenylalanine--tRNA ligase alpha subunit.